The sequence spans 430 residues: Functional amyloid transporter FapF (430 aa).

The signal sequence occupies residues 1–24 (MHRSLSLRAVVCLSTLLPASLLYA). The Periplasmic segment spans residues 25–131 (APDVDIETLK…EASGFFGNGK (107 aa)). Positions 29-64 (DIETLKQELLELKQRYEAQQKALAVLEQRVRQVEDQ) form a coiled coil. The disordered stretch occupies residues 62–114 (EDQPATPAPKRLAKSPADFKQSGSTVAASSGTGGATGGSSYGQSLKDDSEPAQ). A compositionally biased stretch (gly residues) spans 92 to 101 (GTGGATGGSS). The tract at residues 113-125 (AQSVSNLYNEASG) is alpha helical plug. The beta stranded transmembrane segment at 132–142 (FSFETGITYAR) threads the bilayer. Residues 143–172 (YDARQLTLNGFLALDSIFLGNINLDRIKAD) lie on the Extracellular side of the membrane. A beta stranded transmembrane segment spans residues 173 to 183 (NWTLDLTGRYN). Residues 184-189 (LDNRWQ) lie on the Periplasmic side of the membrane. The chain crosses the membrane as a beta stranded span at residues 190-198 (FDVNVPVVY). Topologically, residues 199 to 224 (RESTYQSGGASGGDPQATSEESVSRD) are extracellular. The interval 203 to 223 (YQSGGASGGDPQATSEESVSR) is disordered. A beta stranded transmembrane segment spans residues 225-238 (PTIGDVNFGIAYKF). Residues 239–246 (LDESATMP) lie on the Periplasmic side of the membrane. The beta stranded transmembrane segment at 247–256 (DAVVSVRVKA) threads the bilayer. At 257–288 (PTGKEPFGIKLVRSTANDNLYVPESLPTGNGV) the chain is on the extracellular side. A beta stranded membrane pass occupies residues 289-298 (WSITPGLSLV). Residues 299–304 (KTFDPA) are Periplasmic-facing. A beta stranded membrane pass occupies residues 305–314 (VLFGSVSYTH). At 315–339 (NLEDSFDDISSDVNQKVGGKVRLGD) the chain is on the extracellular side. A beta stranded membrane pass occupies residues 340–348 (SFQFGVGVA). At 349–356 (FALNERMS) the chain is on the periplasmic side. Residues 357–365 (MSFSVSDLI) traverse the membrane as a beta stranded segment. Residues 366 to 386 (QRKSKLKPDGGGWQSIVSSDA) are Extracellular-facing. Residues 387 to 397 (NAGYFNVGMTI) traverse the membrane as a beta stranded segment. At 398–404 (AASENLT) the chain is on the periplasmic side. A beta stranded membrane pass occupies residues 405 to 412 (IVPNLAIG). Topologically, residues 413 to 419 (MTDDAPD) are extracellular. The chain crosses the membrane as a beta stranded span at residues 420 to 428 (FTFSLKFPY). Over 429 to 430 (YF) the chain is Periplasmic.

It belongs to the amyloid transporter (TC 9.B.153) family. In terms of assembly, homotrimer.

The protein resides in the cell outer membrane. Transports fibril components across the outer membrane. Upon overexpression of the endogenous six-gene locus (fapA-fapF) in situ cells form large clumps during liquid growth, make large amounts of biofilm and produce amyloid fibrils. Expression of the 6 gene operon in E.coli strain BL21(DE3) induces flocculation and biofilm formation with copious extracellular fibrils. In Pseudomonas fluorescens, this protein is Functional amyloid transporter FapF.